A 126-amino-acid polypeptide reads, in one-letter code: Desulfoferrodoxin (126 aa).

9 residues coordinate Fe cation: cysteine 10, cysteine 13, cysteine 29, cysteine 30, histidine 49, histidine 69, histidine 75, cysteine 116, and histidine 119.

This sequence belongs to the desulfoferrodoxin family. Homodimer. The cofactor is Fe(3+). Requires Cu(2+) as cofactor.

The catalysed reaction is reduced [rubredoxin] + superoxide + 2 H(+) = oxidized [rubredoxin] + H2O2. In terms of biological role, catalyzes the one-electron reduction of superoxide anion radical to hydrogen peroxide at a nonheme ferrous iron center. Plays a fundamental role in case of oxidative stress via its superoxide detoxification activity. This chain is Desulfoferrodoxin (dfx), found in Nitratidesulfovibrio vulgaris (strain ATCC 29579 / DSM 644 / CCUG 34227 / NCIMB 8303 / VKM B-1760 / Hildenborough) (Desulfovibrio vulgaris).